The chain runs to 230 residues: Somatolactin (230 aa).

Positions 1–23 (MMTAVKQSGVWAVLLWPYLLAVS) are cleaved as a signal peptide. Cystine bridges form between cysteine 28/cysteine 38, cysteine 88/cysteine 204, and cysteine 221/cysteine 229. N-linked (GlcNAc...) asparagine glycosylation is found at asparagine 34 and asparagine 144.

Belongs to the somatotropin/prolactin family. As to expression, pituitary gland.

Its subcellular location is the secreted. This Solea senegalensis (Senegalese sole) protein is Somatolactin.